Reading from the N-terminus, the 408-residue chain is UPF0761 membrane protein Avin_36810 (408 aa).

6 helical membrane-spanning segments follow: residues 33 to 53, 92 to 112, 132 to 152, 174 to 194, 209 to 229, and 238 to 258; these read YTALFAVVPIMTLIFVVLSVV, HLTWLGVGVLMVTALLMLMTV, FLLHWAILSLGPLLLGTGFAL, LLKVMPLLFSTAAFTLLYVAV, LFAAVLFEAAKGLFGLYVALF, and AFAAVPLFLLWMYLSWMIVLL.

This sequence belongs to the UPF0761 family.

It localises to the cell inner membrane. The chain is UPF0761 membrane protein Avin_36810 from Azotobacter vinelandii (strain DJ / ATCC BAA-1303).